We begin with the raw amino-acid sequence, 40 residues long: Sauvagin (40 aa).

Gln-1 carries the pyrrolidone carboxylic acid modification. Ile-40 carries the post-translational modification Isoleucine amide.

The protein belongs to the sauvagine/corticotropin-releasing factor/urotensin I family.

It localises to the secreted. Its function is as follows. Hypotensive and diuretic peptide. This is Sauvagin from Phyllomedusa sauvagei (Sauvage's leaf frog).